The following is a 475-amino-acid chain: Aspartyl/glutamyl-tRNA(Asn/Gln) amidotransferase subunit B (475 aa).

Belongs to the GatB/GatE family. GatB subfamily. As to quaternary structure, heterotrimer of A, B and C subunits.

It carries out the reaction L-glutamyl-tRNA(Gln) + L-glutamine + ATP + H2O = L-glutaminyl-tRNA(Gln) + L-glutamate + ADP + phosphate + H(+). The enzyme catalyses L-aspartyl-tRNA(Asn) + L-glutamine + ATP + H2O = L-asparaginyl-tRNA(Asn) + L-glutamate + ADP + phosphate + 2 H(+). Functionally, allows the formation of correctly charged Asn-tRNA(Asn) or Gln-tRNA(Gln) through the transamidation of misacylated Asp-tRNA(Asn) or Glu-tRNA(Gln) in organisms which lack either or both of asparaginyl-tRNA or glutaminyl-tRNA synthetases. The reaction takes place in the presence of glutamine and ATP through an activated phospho-Asp-tRNA(Asn) or phospho-Glu-tRNA(Gln). The sequence is that of Aspartyl/glutamyl-tRNA(Asn/Gln) amidotransferase subunit B from Thermoanaerobacter pseudethanolicus (strain ATCC 33223 / 39E) (Clostridium thermohydrosulfuricum).